The sequence spans 1744 residues: MRDPDKVKSGPICDTVAVIVLEESDDENALPDVLHEVQSPHTSDNIPTSSIKKFARPRGWYNQSVSSPSEFFYQILTTERGTRRIAYVLSTWEEDEKTLNFKAVSIVLISQNFHPKAFKEILLEISNDLRTPEFSSSSELIRFLTYELVEEGSTIEIRTKTLHVELGFELIPISPVTGKDVAMLFKMLGFQNVIKIIHALLSDCRIVLASSSLMRLSRCQNAILSLLYPFEYVHSCVTILPDSLAEVLESPTPFLIGVLSEFVTSFGDENIVVYLDNGEVHVPDHAEIYKSDDYYYNSLHQRLRDVMFTTTSQEDLSIPNEERIEVDDFILDKKLRACFIYYFAELLYGYQYYILYTRIKGNFEKKLTTSLTFHVGAFRGFRKLTDMMSSSLLKSVYFQTFILTRALPRRKHDLFDEISCFKELDQLIFKQNSTSSESKKIIEHISCELIQKERYMEKCSARKQEIFTKIHWISGKELAQNNNSIIHTVKPKMRSNVILQAMLPVVNTHAEYHANQFEAYAHRIEALRNCLAAIFEGKVAFASKSLDAVKSSMRFAPLRIELCRLLNQKCSHDKLTDKQFEDIALLMNAALQAECEEDKDGVVRSLMYLSNVYSRKVAQGMQQYMYTAVQEHKVWKNQRFWTSCFYYEVHEMLFSEMLQKDRKITESLWCHTLRPCAMEMINTDDTDQEELVKQENEMIQAQAKHFANILISLQIPLSEEFFEHEDAHRSVLNEKCKWIVNTLDSILGVTGRINGLSLSRIQTYVEAHVESLRDVYVEMSTGEHLKKGNFDPVLAHGEFLISDPIDCYLLTSIEESEMSLNRLENLLPADGSLFLTNYRVIFKGKSVDINATNGTIVQTIPLYSMESFKKLTNKKLIPTQLIEKGVKIEHIISIRSSCASSIIIAFDEDEINNMAIEKFLEVIETNSHNSFAFYNTRKDMKVVENGSHKFGTLNSAIRGFTKKKTDTRRIRSHSSHRGSIQLSFDKMEELDYLKKNAHIRYAVIDYPRIGLNSKIVKLRMSHSNLDYTICPSYPGNFIVPSETNESELAKVAKGFVEHRLPVVVWMNENGALLVRASAFTSIDMVKKLKKVVNYRRNASKLTGSMTGSQQTLHSKASSNEESSSNIVAGAEIKSAEVQMNYIAKLSNSSQRAVSYALPTQYADKFSTFNDGCTLTQNNANGFPTTRIHRKALYVLLEKGHGVKIPIDSNAEAIMVRSVKESELRRSLQRARQICSSEFQVENRTSFLESWNASNWPQCVSRMIELSNSIVALMNLYNSSVAICLEAGRSITTILSSLSQLLSDPYYRTCDGFQVLVEKEWLAFGHYFHKDTETSSPSFICFLDCVYQISQQYPTAFEFSYFYISFLAYHSTAGYFRTFIDDCEEKRLQSDANEFYLPDNLATINVWEFIKLRNRVSAAFYNELYEQIGDIVIPSSSIPQIHMWPFLAETHLKYGSPYDIEPASHEQQLVDPDYEEEEDWSKLNNTDIDERHLNRRVRSPERDPANMDMIRLLQKSYLTELFDASDRKTTTNGESNGKETIHELTPFTVGARPVQCCYCTNILTRWSKAVHCKKCRIHVHEGCVNRNITIGNITHTWDAKPFEDIKMPSGAIQIGTPQAEKMLHSPNNTLTRESMSPPTANTIPPLCTGYLSKRGAKLKLWVPRFFVLYPDSPKVYYYEDFENWKTAEKPSGCIDLVDFKSFNLEQTGRRGLIELHMKNKTHRLLSENINEAIRWKECIEQVIRD.

The region spanning 14 to 150 (DTVAVIVLEE…IRFLTYELVE (137 aa)) is the uDENN domain. The 140-residue stretch at 165-304 (ELGFELIPIS…YYNSLHQRLR (140 aa)) folds into the cDENN domain. Residues 306 to 412 (VMFTTTSQED…LTRALPRRKH (107 aa)) form the dDENN domain. The 85-residue stretch at 787-871 (KGNFDPVLAH…LYSMESFKKL (85 aa)) folds into the GRAM domain. The Myotubularin phosphatase domain occupies 996–1447 (NAHIRYAVID…PQIHMWPFLA (452 aa)). The segment covering 1102–1116 (TGSMTGSQQTLHSKA) has biased composition (polar residues). The segment at 1102-1123 (TGSMTGSQQTLHSKASSNEESS) is disordered. The segment at 1540–1590 (IHELTPFTVGARPVQCCYCTNILTRWSKAVHCKKCRIHVHEGCVNRNITIG) adopts a Phorbol-ester/DAG-type zinc-finger fold. The 101-residue stretch at 1643 to 1743 (PPLCTGYLSK…WKECIEQVIR (101 aa)) folds into the PH domain.

Belongs to the protein-tyrosine phosphatase family. Non-receptor class myotubularin subfamily.

In terms of biological role, probably acts as an adapter for other myotubularin-like phosphatases. In Caenorhabditis elegans, this protein is Myotubularin-related protein 5.